Here is a 521-residue protein sequence, read N- to C-terminus: Probable glycogen synthase (521 aa).

This sequence belongs to the glycosyltransferase 1 family. Bacterial/plant glycogen synthase subfamily.

It carries out the reaction [(1-&gt;4)-alpha-D-glucosyl](n) + ADP-alpha-D-glucose = [(1-&gt;4)-alpha-D-glucosyl](n+1) + ADP + H(+). It participates in glycan biosynthesis; glycogen biosynthesis. Its function is as follows. Synthesizes alpha-1,4-glucan chains using ADP-glucose. The polypeptide is Probable glycogen synthase (glgA) (Methanocaldococcus jannaschii (strain ATCC 43067 / DSM 2661 / JAL-1 / JCM 10045 / NBRC 100440) (Methanococcus jannaschii)).